The following is a 556-amino-acid chain: Small ribosomal subunit protein bS1 (556 aa).

S1 motif domains are found at residues 35 to 105 (TIKE…ISQQ), 120 to 183 (NAII…ISRK), 204 to 272 (TEPV…LSIK), 289 to 359 (GYAI…VSLK), 377 to 444 (DVLE…LSAK), and 461 to 525 (DSVI…ASVH).

This sequence belongs to the bacterial ribosomal protein bS1 family.

Its function is as follows. Binds mRNA; thus facilitating recognition of the initiation point. It is needed to translate mRNA with a short Shine-Dalgarno (SD) purine-rich sequence. The polypeptide is Small ribosomal subunit protein bS1 (rpsA) (Helicobacter pylori (strain ATCC 700392 / 26695) (Campylobacter pylori)).